We begin with the raw amino-acid sequence, 914 residues long: Alanine--tRNA ligase (914 aa).

The Zn(2+) site is built by histidine 613, histidine 617, cysteine 717, and histidine 721.

It belongs to the class-II aminoacyl-tRNA synthetase family. Zn(2+) is required as a cofactor.

The protein resides in the cytoplasm. The catalysed reaction is tRNA(Ala) + L-alanine + ATP = L-alanyl-tRNA(Ala) + AMP + diphosphate. Catalyzes the attachment of alanine to tRNA(Ala) in a two-step reaction: alanine is first activated by ATP to form Ala-AMP and then transferred to the acceptor end of tRNA(Ala). Also edits incorrectly charged Ser-tRNA(Ala) and Gly-tRNA(Ala) via its editing domain. The polypeptide is Alanine--tRNA ligase (Pyrococcus abyssi (strain GE5 / Orsay)).